A 331-amino-acid polypeptide reads, in one-letter code: Putative NAD(P)H nitroreductase acg (331 aa).

Residues 28-32 (QPWRW) and Arg-316 contribute to the FMN site.

Belongs to the nitroreductase family. The cofactor is FMN.

The sequence is that of Putative NAD(P)H nitroreductase acg (acg) from Mycobacterium tuberculosis (strain CDC 1551 / Oshkosh).